We begin with the raw amino-acid sequence, 416 residues long: Serine/threonine transporter SstT (416 aa).

9 helical membrane-spanning segments follow: residues 15–35 (SLVS…MFMP), 49–69 (VGAL…AAII), 82–102 (ILLL…VASF), 141–161 (ALMD…GIAM), 192–212 (LGIL…ALFG), 217–237 (LVVL…IIVF), 288–308 (VSIP…ITVL), 330–350 (VVAT…LLLI), and 356–376 (LFGI…IIGV).

The protein belongs to the dicarboxylate/amino acid:cation symporter (DAACS) (TC 2.A.23) family.

It localises to the cell inner membrane. It catalyses the reaction L-serine(in) + Na(+)(in) = L-serine(out) + Na(+)(out). The enzyme catalyses L-threonine(in) + Na(+)(in) = L-threonine(out) + Na(+)(out). Involved in the import of serine and threonine into the cell, with the concomitant import of sodium (symport system). This Aeromonas salmonicida (strain A449) protein is Serine/threonine transporter SstT.